The chain runs to 508 residues: Steroid 17-alpha-hydroxylase/17,20 lyase (508 aa).

Cys-445 is a binding site for heme.

Belongs to the cytochrome P450 family. Heme serves as cofactor.

It is found in the membrane. It catalyses the reaction a C21-steroid + reduced [NADPH--hemoprotein reductase] + O2 = a 17alpha-hydroxy-C21-steroid + oxidized [NADPH--hemoprotein reductase] + H2O + H(+). The catalysed reaction is 17alpha-hydroxyprogesterone + reduced [NADPH--hemoprotein reductase] + O2 = androst-4-ene-3,17-dione + acetate + oxidized [NADPH--hemoprotein reductase] + H2O + 2 H(+). It carries out the reaction 17alpha-hydroxypregnenolone + reduced [NADPH--hemoprotein reductase] + O2 = 3beta-hydroxyandrost-5-en-17-one + acetate + oxidized [NADPH--hemoprotein reductase] + H2O + 2 H(+). It functions in the pathway lipid metabolism; steroid biosynthesis. Functionally, conversion of pregnenolone and progesterone to their 17-alpha-hydroxylated products and subsequently to dehydroepiandrosterone (DHEA) and androstenedione. Catalyzes both the 17-alpha-hydroxylation and the 17,20-lyase reaction. In Gallus gallus (Chicken), this protein is Steroid 17-alpha-hydroxylase/17,20 lyase (CYP17A1).